A 251-amino-acid chain; its full sequence is Hydroxyacylglutathione hydrolase (251 aa).

Zn(2+) is bound by residues His-53, His-55, Asp-57, His-58, His-110, Asp-127, and His-165.

The protein belongs to the metallo-beta-lactamase superfamily. Glyoxalase II family. As to quaternary structure, monomer. Requires Zn(2+) as cofactor.

The catalysed reaction is an S-(2-hydroxyacyl)glutathione + H2O = a 2-hydroxy carboxylate + glutathione + H(+). It functions in the pathway secondary metabolite metabolism; methylglyoxal degradation; (R)-lactate from methylglyoxal: step 2/2. Functionally, thiolesterase that catalyzes the hydrolysis of S-D-lactoyl-glutathione to form glutathione and D-lactic acid. This Escherichia coli O81 (strain ED1a) protein is Hydroxyacylglutathione hydrolase.